Here is a 360-residue protein sequence, read N- to C-terminus: Phosphoserine aminotransferase (360 aa).

R43 provides a ligand contact to L-glutamate. Residues 77–78 (AS), W103, T152, D172, and Q195 each bind pyridoxal 5'-phosphate. The residue at position 196 (K196) is an N6-(pyridoxal phosphate)lysine. 237 to 238 (NT) is a binding site for pyridoxal 5'-phosphate.

The protein belongs to the class-V pyridoxal-phosphate-dependent aminotransferase family. SerC subfamily. As to quaternary structure, homodimer. It depends on pyridoxal 5'-phosphate as a cofactor.

The protein localises to the cytoplasm. It carries out the reaction O-phospho-L-serine + 2-oxoglutarate = 3-phosphooxypyruvate + L-glutamate. The catalysed reaction is 4-(phosphooxy)-L-threonine + 2-oxoglutarate = (R)-3-hydroxy-2-oxo-4-phosphooxybutanoate + L-glutamate. Its pathway is amino-acid biosynthesis; L-serine biosynthesis; L-serine from 3-phospho-D-glycerate: step 2/3. It functions in the pathway cofactor biosynthesis; pyridoxine 5'-phosphate biosynthesis; pyridoxine 5'-phosphate from D-erythrose 4-phosphate: step 3/5. In terms of biological role, catalyzes the reversible conversion of 3-phosphohydroxypyruvate to phosphoserine and of 3-hydroxy-2-oxo-4-phosphonooxybutanoate to phosphohydroxythreonine. The sequence is that of Phosphoserine aminotransferase from Syntrophobacter fumaroxidans (strain DSM 10017 / MPOB).